The sequence spans 686 residues: Mitochondrial Rho GTPase 1 (686 aa).

The Cytoplasmic portion of the chain corresponds to 1-648; it reads MPRRDLVRIV…PAQRIRVVAR (648 aa). The Miro 1 domain maps to 4 to 172; it reads RDLVRIVLVG…FYFAQKAVLH (169 aa). GTP contacts are provided by residues 13–20, 59–63, and 117–120; these read GDDGVGKS, DTSSN, and NKID. 2 EF-hand domains span residues 188–223 and 341–376; these read KCLE…CFST and LGNQ…SPGN. 8 residues coordinate Ca(2+): Asp201, Asp203, Asp205, Glu212, Asp354, Asp356, Asp358, and Glu365. The 170-residue stretch at 455-624 folds into the Miro 2 domain; it reads RNVFLCYVLG…WVAITRVALD (170 aa). GTP is bound by residues 464-471, 506-510, and 574-577; these read GATGSGKT, EMEGV, and TKSD. The chain crosses the membrane as a helical; Anchor for type IV membrane protein span at residues 649 to 665; sequence WGLAATTISAIVAVWMK. The Mitochondrial intermembrane portion of the chain corresponds to 666-686; it reads WQGYSFKGIWGWMAKFAGLRT.

This sequence belongs to the mitochondrial Rho GTPase family.

The protein resides in the mitochondrion outer membrane. Mitochondrial GTPase involved in mitochondrial trafficking. Probably involved in control of anterograde transport of mitochondria and their subcellular distribution. The sequence is that of Mitochondrial Rho GTPase 1 (GEM1) from Cryptococcus neoformans var. neoformans serotype D (strain B-3501A) (Filobasidiella neoformans).